The sequence spans 256 residues: Type II phosphatidylinositol 4,5-bisphosphate 4-phosphatase (256 aa).

Positions 1–10 (MAADGIDERS) are enriched in basic and acidic residues. The disordered stretch occupies residues 1 to 25 (MAADGIDERSPLISPSSGNVTPTAP). A compositionally biased stretch (polar residues) spans 13–22 (ISPSSGNVTP). The active site involves C106. The CX5R motif motif lies at 106–112 (CKDISRR). 2 consecutive transmembrane segments (helical) span residues 191–211 (CCTY…LTVG) and 226–246 (WAVA…WGAI).

Its subcellular location is the late endosome membrane. The protein resides in the lysosome membrane. It catalyses the reaction a 1,2-diacyl-sn-glycero-3-phospho-(1D-myo-inositol-4,5-bisphosphate) + H2O = a 1,2-diacyl-sn-glycero-3-phospho-(1D-myo-inositol-5-phosphate) + phosphate. In terms of biological role, catalyzes the hydrolysis of phosphatidylinositol-4,5-bisphosphate (PtdIns-4,5-P2) to phosphatidylinositol-4-phosphate (PtdIns-4-P). The polypeptide is Type II phosphatidylinositol 4,5-bisphosphate 4-phosphatase (Xenopus laevis (African clawed frog)).